Reading from the N-terminus, the 296-residue chain is Giardin subunit alpha-4 (296 aa).

4 Annexin repeats span residues 3–72 (ATVS…VHAW), 74–146 (SRFE…GWVK), 153–223 (KSIK…AHHW), and 226–294 (DPGQ…VFWR).

It belongs to the annexin family. Giardin subunit alpha subfamily.

It localises to the cytoplasm. The protein localises to the cytoskeleton. Giardins are involved in parasite attachment to the intestinal mucosa and in the cytoskeletal disassembly and reassembly that marks the transition from infectious trophozoite to transmissible cyst. They may interact with other cytoskeletal proteins such as microtubules in the microribbons or crossbridges, to maintain the integrity of the ventral disk. This chain is Giardin subunit alpha-4, found in Giardia intestinalis (Giardia lamblia).